A 518-amino-acid polypeptide reads, in one-letter code: Major facilitator superfamily domain-containing protein 8 (518 aa).

The segment at 1–20 (MAGLRNESEQEPLLGDTPGS) is disordered. Residues 1–40 (MAGLRNESEQEPLLGDTPGSREWDILETEEHYKSRWRSIR) lie on the Cytoplasmic side of the membrane. Residues 13–14 (LL) carry the Dileucine internalization motif motif. Residues 41–61 (ILYLTMFLSSVGFSVVMMSIW) traverse the membrane as a helical segment. Over 62–74 (PYLQKIDPTADTS) the chain is Extracellular. Residues 75-95 (FLGWVIASYSLGQMVASPIFG) traverse the membrane as a helical segment. The Cytoplasmic portion of the chain corresponds to 96–105 (LWSNYRPRKE). A helical transmembrane segment spans residues 106-126 (PLIVSILISVAANCLYAYLHI). Topologically, residues 127 to 131 (PASHN) are extracellular. A helical transmembrane segment spans residues 132 to 152 (KYYMLVARGLLGIGAGNVAVV). Over 153–173 (RSYTAGATSLQERTSSMANIS) the chain is Cytoplasmic. A helical membrane pass occupies residues 174-194 (MCQALGFILGPVFQTCFTFLG). Residues 195 to 211 (EKGVTWDVIKLQINMYT) are Extracellular-facing. The chain crosses the membrane as a helical span at residues 212–232 (TPVLLSAFLGILNIILILAIL). Over 233-266 (REHRVDDSGRQCKSINFEEASTDEAQVPQGNIDQ) the chain is Cytoplasmic. A helical transmembrane segment spans residues 267–287 (VAVVAINVLFFVTLFIFALFE). Residues 288-304 (TIITPLTMDMYAWTQEQ) lie on the Extracellular side of the membrane. The chain crosses the membrane as a helical span at residues 305–325 (AVLYNGIILAALGVEAVVIFL). Residues 326–337 (GVKLLSKKIGER) lie on the Cytoplasmic side of the membrane. The chain crosses the membrane as a helical span at residues 338-358 (AILLGGLIVVWVGFFILLPWG). The Extracellular portion of the chain corresponds to 359 to 412 (NQFPKIQWEDLHNNSIPNTTFGEIIIGLWKSPMEDDNERPTGCSIEQAWCLYTP). Asparagine 371 and asparagine 376 each carry an N-linked (GlcNAc...) asparagine glycan. Residues 413–433 (VIHLAQFLTSAVLIGLGYPVC) form a helical membrane-spanning segment. Over 434-451 (NLMSYTLYSKILGPKPQG) the chain is Cytoplasmic. A helical membrane pass occupies residues 452–472 (VYMGWLTASGSGARILGPMFI). Topologically, residues 473 to 482 (SQVYAHWGPR) are extracellular. The chain crosses the membrane as a helical span at residues 483-503 (WAFSLVCGIIVLTITLLGVVY). Residues 504 to 518 (KRLIALSVRYGRIQE) are Cytoplasmic-facing.

It belongs to the major facilitator superfamily. In terms of tissue distribution, expressed at very low levels in all tissues tested.

It is found in the endosome membrane. The protein resides in the lysosome membrane. The catalysed reaction is chloride(in) = chloride(out). It catalyses the reaction iodide(out) = iodide(in). The enzyme catalyses fluoride(in) = fluoride(out). Its activity is regulated as follows. Inhibited by chloride channel blockers 4,4'-diisothiocyano-2,2'-stilbenedisulfonate (DIDS), niflumic acid (NFA), and 5-Nitro-2-(3-phenylpropylamino) benzoic acid (NPPB). Its function is as follows. Outward-rectifying chloride channel involved in endolysosomal chloride homeostasis, membrane fusion and function. Conducts chloride currents up to hundreds of picoamperes. Regulates lysosomal calcium content by reducing the lysosomal membrane potential, thereby activating TRPML1 channel and further release of lysosomal calcium ions. Regulates the pH in endolysosomal compartments and may contribute to progressive acidification from endosome to lysosome. Permeable to other halides such as iodide and fluoride ions. The polypeptide is Major facilitator superfamily domain-containing protein 8 (Homo sapiens (Human)).